Reading from the N-terminus, the 216-residue chain is GTP cyclohydrolase 1 (216 aa).

The Zn(2+) site is built by Cys108, His111, and Cys179.

Belongs to the GTP cyclohydrolase I family. As to quaternary structure, homomer.

The enzyme catalyses GTP + H2O = 7,8-dihydroneopterin 3'-triphosphate + formate + H(+). It participates in cofactor biosynthesis; 7,8-dihydroneopterin triphosphate biosynthesis; 7,8-dihydroneopterin triphosphate from GTP: step 1/1. The polypeptide is GTP cyclohydrolase 1 (Shewanella baltica (strain OS223)).